The following is a 286-amino-acid chain: Probable ketoamine kinase YniA (286 aa).

Position 91 to 93 (91 to 93 (DYL)) interacts with ATP. D193 acts as the Proton acceptor in catalysis.

This sequence belongs to the fructosamine kinase family.

In terms of biological role, ketoamine kinase that phosphorylates ketoamines on the third carbon of the sugar moiety to generate ketoamine 3-phosphate. The protein is Probable ketoamine kinase YniA (yniA) of Escherichia coli O157:H7.